The primary structure comprises 179 residues: Large ribosomal subunit protein uL5 (179 aa).

This sequence belongs to the universal ribosomal protein uL5 family. Part of the 50S ribosomal subunit; part of the 5S rRNA/L5/L18/L25 subcomplex. Contacts the 5S rRNA and the P site tRNA. Forms a bridge to the 30S subunit in the 70S ribosome.

This is one of the proteins that bind and probably mediate the attachment of the 5S RNA into the large ribosomal subunit, where it forms part of the central protuberance. In the 70S ribosome it contacts protein S13 of the 30S subunit (bridge B1b), connecting the 2 subunits; this bridge is implicated in subunit movement. Contacts the P site tRNA; the 5S rRNA and some of its associated proteins might help stabilize positioning of ribosome-bound tRNAs. In Verminephrobacter eiseniae (strain EF01-2), this protein is Large ribosomal subunit protein uL5.